Here is a 694-residue protein sequence, read N- to C-terminus: MDTPRLHPETIAAVKERADIVDIVSEQVVLKKRGKDFVGLCPFHDDKSPSFTVSPAKQFYYCFSCGAGGNPIKFLMELGKQSFSEVVLDLAKRYQVPVRTLEVQQHQELQRQLSRRERLYEVLAVATQFYEQSLRRPEGAAALDYLRRSRQLQESTIQKFQLGYAPAQWASLATHLIEQKRFPADLVEEAGLVVARRNGQGYYDRFRDRLMIPIHDLQGRVVGFGGRTLTGEEPKYLNSPETTLFEKGKLLFGLDKARAAIAKQDQAVVVEGYFDVIALHAAGIDHAVASLGTALSRQQVKLLSRYSESNQIVLNFDADRAGAKAAERAIGEVEDLAYQGQVQLRVLNLPGGKDADEYLQRHSVADYRELLARSPLWLDWQIDQLLRDRNLDQADQFQAVVQAIVQLLGKLPNTPLRTHYVHQVAERLSQGEARTAVQLASDLRAQVRGQRWHGQASRWEKPGDVSIREQAEAQILKVYLHCPRLRLAVRKTLHDREIQGFSLQPHRLLWQAIAEIEEAHLGFAAMYQVERGEGNGDDLAAIDLVPILRDRLDQLTGVSLGGFLELSENDHADLTHPLPLLRGAVALVERLRCEKRCRHLLDSWARQSIHTFEHCIEQLLQAGIGEDVDAEAQITALHEQLNQEALHFQKLYYNERRYLQQLDQERCLNPQAFLGMTEHDATAIAPTTPQPISA.

The CHC2-type zinc-finger motif lies at 41–65 (CPFHDDKSPSFTVSPAKQFYYCFSC). In terms of domain architecture, Toprim spans 265-348 (DQAVVVEGYF…QGQVQLRVLN (84 aa)). Residues Glu271, Asp317, and Asp319 each contribute to the Mg(2+) site.

Belongs to the DnaG primase family. As to quaternary structure, monomer. Interacts with DnaB. The cofactor is Zn(2+). Requires Mg(2+) as cofactor.

The enzyme catalyses ssDNA + n NTP = ssDNA/pppN(pN)n-1 hybrid + (n-1) diphosphate.. In terms of biological role, RNA polymerase that catalyzes the synthesis of short RNA molecules used as primers for DNA polymerase during DNA replication. The protein is DNA primase of Synechococcus elongatus (strain ATCC 33912 / PCC 7942 / FACHB-805) (Anacystis nidulans R2).